The primary structure comprises 577 residues: Zinc finger-containing ubiquitin peptidase 1 (577 aa).

The segment at 2 to 24 (LSCDICGETVTSEPDRKAHLIVH) adopts a C2H2-type 1 zinc-finger fold. The C2H2-type 2; atypical zinc finger occupies 29–52 (IICPFCKLSGINYNEMCFHIETAH). 2 consecutive C2H2-type zinc fingers follow at residues 153–176 (PECP…KTKH) and 192–214 (YDCP…VDLH). The tract at residues 225-247 (DRVQCSSDRELAHQLQQEEERKR) is MIU. Positions 231–261 (SDRELAHQLQQEEERKRKSEESRQEREEFQK) are enriched in basic and acidic residues. Residues 231–262 (SDRELAHQLQQEEERKRKSEESRQEREEFQKL) form a disordered region. The zUBD/ZHA stretch occupies residues 248–273 (KSEESRQEREEFQKLQRQYGLDNSGG). At Lys-261 the chain carries N6-acetyllysine. The active-site Nucleophile is Cys-359. The active-site Proton acceptor is His-490. Asp-511 is a catalytic residue.

This sequence belongs to the peptidase C78 family. ZUFSP subfamily. Interacts with RPA1 and RPA2.

The protein localises to the cytoplasm. The protein resides in the nucleus. It catalyses the reaction Thiol-dependent hydrolysis of ester, thioester, amide, peptide and isopeptide bonds formed by the C-terminal Gly of ubiquitin (a 76-residue protein attached to proteins as an intracellular targeting signal).. In terms of biological role, deubiquitinase with endodeubiquitinase activity that specifically interacts with and cleaves 'Lys-63'-linked long polyubiquitin chains. Shows only weak activity against 'Lys-11' and 'Lys-48'-linked chains. Plays an important role in genome stability pathways, functioning to prevent spontaneous DNA damage and also promote cellular survival in response to exogenous DNA damage. Modulates the ubiquitination status of replication protein A (RPA) complex proteins in response to replication stress. The sequence is that of Zinc finger-containing ubiquitin peptidase 1 from Rattus norvegicus (Rat).